The following is a 188-amino-acid chain: Peroxiredoxin y4vD (188 aa).

In terms of domain architecture, Thioredoxin spans 2–152 (PVKKRVPFVA…VEQWFEEEGF (151 aa)). The Cysteine sulfenic acid (-SOH) intermediate (for peroxiredoxin activity) role is filled by cysteine 56.

The protein belongs to the peroxiredoxin family. Prx5 subfamily. Monomer.

It carries out the reaction a hydroperoxide + 2 glutathione = an alcohol + glutathione disulfide + H2O. In terms of biological role, thiol-specific peroxidase that catalyzes the reduction of hydrogen peroxide and organic hydroperoxides to water and alcohols, respectively. Plays a role in cell protection against oxidative stress by detoxifying peroxides. This chain is Peroxiredoxin y4vD, found in Sinorhizobium fredii (strain NBRC 101917 / NGR234).